The sequence spans 309 residues: Olfactory receptor 1A1 (309 aa).

Residues 1–25 (MRENNQSSTLEFILLGVTGQQEQED) lie on the Extracellular side of the membrane. Residue N5 is glycosylated (N-linked (GlcNAc...) asparagine). Residues 26 to 49 (FFYILFLFIYPITLIGNLLIVLAI) form a helical membrane-spanning segment. At 50-57 (CSDVRLHN) the chain is on the cytoplasmic side. The helical transmembrane segment at 58–79 (PMYFLLANLSLVDIFFSSVTIP) threads the bilayer. Over 80-100 (KMLANHLLGSKSISFGGCLTQ) the chain is Extracellular. C97 and C189 are disulfide-bonded. The chain crosses the membrane as a helical span at residues 101-120 (MYFMIALGNTDSYILAAMAY). Topologically, residues 121 to 139 (DRAVAISRPLHYTTIMSPR) are cytoplasmic. Residues 140–158 (SCIWLIAGSWVIGNANALP) form a helical membrane-spanning segment. Topologically, residues 159–195 (HTLLTASLSFCGNQEVANFYCDITPLLKLSCSDIHFH) are extracellular. A helical membrane pass occupies residues 196 to 218 (VKMMYLGVGIFSVPLLCIIVSYI). Residues 219–235 (RVFSTVFQVPSTKGVLK) lie on the Cytoplasmic side of the membrane. A helical transmembrane segment spans residues 236–258 (AFSTCGSHLTVVSLYYGTVMGTY). At 259–270 (FRPLTNYSLKDA) the chain is on the extracellular side. N-linked (GlcNAc...) asparagine glycosylation occurs at N264. A helical transmembrane segment spans residues 271-290 (VITVMYTAVTPMLNPFIYSL). Topologically, residues 291–309 (RNRDMKAALRKLFNKRISS) are cytoplasmic.

Belongs to the G-protein coupled receptor 1 family.

Its subcellular location is the cell membrane. Functionally, odorant receptor. The sequence is that of Olfactory receptor 1A1 (OR1A1) from Homo sapiens (Human).